A 1385-amino-acid chain; its full sequence is Contactin-associated protein 1 (1385 aa).

Residues 1–20 (MMSLRLFSILLATVVSGAWG) form the signal peptide. The Extracellular portion of the chain corresponds to 21–1284 (WGYYGCNEEL…PYYHDDGWIA (1264 aa)). The F5/8 type C domain occupies 26–169 (CNEELVGPLY…IGLRLGIYGC (144 aa)). A disulfide bond links Cys26 and Cys169. N-linked (GlcNAc...) asparagine glycans are attached at residues Asn121, Asn129, and Asn277. 2 Laminin G-like domains span residues 204-356 (FKTE…AFRC) and 390-539 (FRTW…FDTC). A disulfide bridge connects residues Cys324 and Cys356. Asn421, Asn500, and Asn519 each carry an N-linked (GlcNAc...) asparagine glycan. Disulfide bonds link Cys507–Cys539, Cys545–Cys556, Cys550–Cys565, and Cys567–Cys577. Positions 545-577 (CSPNMCEHDGRCYQSWDDFICYCELTGYKGVTC) constitute an EGF-like 1 domain. One can recognise a Fibrinogen C-terminal domain in the interval 577 to 796 (CHEPLYKESC…NTISFHTGAA (220 aa)). Residues Asn598, Asn654, Asn665, Asn764, Asn805, Asn844, Asn861, Asn949, and Asn957 are each glycosylated (N-linked (GlcNAc...) asparagine). Positions 814–958 (FRTSAPSGVF…NASEGTFPNC (145 aa)) constitute a Laminin G-like 3 domain. Disulfide bonds link Cys931-Cys958, Cys962-Cys975, Cys969-Cys984, and Cys986-Cys996. In terms of domain architecture, EGF-like 2 spans 962-996 (CTHPRFPCFHGGRCVERYSYYTCDCDLTAFDGPYC). N-linked (GlcNAc...) asparagine glycosylation is found at Asn1079 and Asn1148. One can recognise a Laminin G-like 4 domain in the interval 1089-1251 (FSTNSAPAVL…VQGELSESNC (163 aa)). Residues Cys1210 and Cys1251 are joined by a disulfide bond. A helical transmembrane segment spans residues 1285-1305 (ILLGFLVAFLLLGLVGMLVLF). Residues 1306–1385 (YLQNHRYKGS…PQILEESRSE (80 aa)) lie on the Cytoplasmic side of the membrane. Residues 1317-1385 (HTNEPKATHD…PQILEESRSE (69 aa)) are disordered. A compositionally biased stretch (basic and acidic residues) spans 1319 to 1329 (NEPKATHDSHP). Positions 1334-1367 (PLPPSGPAQAPAPTPAPTQLPTPAPAPAPAPASG) are enriched in pro residues. The SH3-binding motif lies at 1334–1370 (PLPPSGPAQAPAPTPAPTQLPTPAPAPAPAPASGPGP). Ser1384 bears the Phosphoserine mark.

It belongs to the neurexin family. Interacts with CNTN1/contactin in cis form. As to expression, expressed in brain. In myelinated nerve fibers predominantly found in paranodal axoglial junctions. In the internodal region of myelinated axons in the CNS and the PNS also found as a thin line apposing the inner mesaxon of the myelin sheath. In PNS neurons this line forms a circumferential ring that apposes the innermost aspect of Schmidt-Lanterman incisures.

It localises to the membrane. Its subcellular location is the cell junction. It is found in the paranodal septate junction. In terms of biological role, required, with CNTNAP2, for radial and longitudinal organization of myelinated axons. Plays a role in the formation of functional distinct domains critical for saltatory conduction of nerve impulses in myelinated nerve fibers. Demarcates the paranodal region of the axo-glial junction. In association with contactin involved in the signaling between axons and myelinating glial cells. The polypeptide is Contactin-associated protein 1 (Cntnap1) (Mus musculus (Mouse)).